Reading from the N-terminus, the 615-residue chain is Medium-chain acyl-CoA ligase ACSF2, mitochondrial (615 aa).

The N-terminal 42 residues, 1–42 (MAVYVGMLRVARLCARSPRVLGARVGLSRVWQEARLWGVRPL), are a transit peptide targeting the mitochondrion. At K179 the chain carries N6-acetyllysine. Position 182 is an N6-acetyllysine; alternate (K182). K182 bears the N6-succinyllysine; alternate mark. Residue K199 is modified to N6-acetyllysine. ATP is bound at residue 263–271 (TSGTTGSPK). 2 positions are modified to N6-acetyllysine: K340 and K398. K478 bears the N6-succinyllysine mark. ATP-binding residues include D493 and R508. Position 510 is an N6-acetyllysine (K510). K544 and K570 each carry N6-acetyllysine; alternate. 2 positions are modified to N6-succinyllysine; alternate: K544 and K570. K599 lines the ATP pocket. An N6-succinyllysine modification is found at K599.

Belongs to the ATP-dependent AMP-binding enzyme family.

It localises to the mitochondrion. It carries out the reaction a medium-chain fatty acid + ATP + CoA = a medium-chain fatty acyl-CoA + AMP + diphosphate. The catalysed reaction is octanoate + ATP + CoA = octanoyl-CoA + AMP + diphosphate. Its function is as follows. Acyl-CoA synthases catalyze the initial reaction in fatty acid metabolism, by forming a thioester with CoA. Has some preference toward medium-chain substrates. Plays a role in adipocyte differentiation. The polypeptide is Medium-chain acyl-CoA ligase ACSF2, mitochondrial (Bos taurus (Bovine)).